We begin with the raw amino-acid sequence, 392 residues long: 1-deoxy-D-xylulose 5-phosphate reductoisomerase (392 aa).

NADPH-binding residues include threonine 10, glycine 11, serine 12, isoleucine 13, asparagine 38, and asparagine 124. Residue lysine 125 coordinates 1-deoxy-D-xylulose 5-phosphate. Glutamate 126 is a binding site for NADPH. Residue aspartate 150 participates in Mn(2+) binding. Serine 151, glutamate 152, serine 176, and histidine 199 together coordinate 1-deoxy-D-xylulose 5-phosphate. A Mn(2+)-binding site is contributed by glutamate 152. Glycine 205 is an NADPH binding site. 1-deoxy-D-xylulose 5-phosphate is bound by residues serine 212, asparagine 217, lysine 218, and glutamate 221. Residue glutamate 221 participates in Mn(2+) binding.

The protein belongs to the DXR family. It depends on Mg(2+) as a cofactor. Mn(2+) serves as cofactor.

It carries out the reaction 2-C-methyl-D-erythritol 4-phosphate + NADP(+) = 1-deoxy-D-xylulose 5-phosphate + NADPH + H(+). The protein operates within isoprenoid biosynthesis; isopentenyl diphosphate biosynthesis via DXP pathway; isopentenyl diphosphate from 1-deoxy-D-xylulose 5-phosphate: step 1/6. In terms of biological role, catalyzes the NADPH-dependent rearrangement and reduction of 1-deoxy-D-xylulose-5-phosphate (DXP) to 2-C-methyl-D-erythritol 4-phosphate (MEP). The chain is 1-deoxy-D-xylulose 5-phosphate reductoisomerase from Synechococcus sp. (strain JA-2-3B'a(2-13)) (Cyanobacteria bacterium Yellowstone B-Prime).